The chain runs to 316 residues: Retinol dehydrogenase 7 (316 aa).

33-57 (FITGCDSGFGNLLARQLDRRGMRVL) contributes to the NADP(+) binding site. Residue S163 coordinates substrate. The active-site Proton acceptor is Y175.

Belongs to the short-chain dehydrogenases/reductases (SDR) family. As to expression, highly expressed in liver. Also expressed in lung, eye, kidney, and brain.

The protein localises to the microsome. It is found in the endoplasmic reticulum. It catalyses the reaction all-trans-retinol--[retinol-binding protein] + NAD(+) = all-trans-retinal--[retinol-binding protein] + NADH + H(+). It functions in the pathway cofactor metabolism; retinol metabolism. Functionally, acts on androgens and retinols, i.e. has steroid 3-alpha- and 17-beta-dehydrogenase and cis/trans-retinol catalytic activities. The polypeptide is Retinol dehydrogenase 7 (Rdh7) (Mus musculus (Mouse)).